The sequence spans 153 residues: 6,7-dimethyl-8-ribityllumazine synthase (153 aa).

5-amino-6-(D-ribitylamino)uracil-binding positions include Phe21, 55–57 (AFE), and 79–81 (TVI). Position 84 to 85 (84 to 85 (AT)) interacts with (2S)-2-hydroxy-3-oxobutyl phosphate. Residue His87 is the Proton donor of the active site. Phe112 is a binding site for 5-amino-6-(D-ribitylamino)uracil. Residue Arg126 participates in (2S)-2-hydroxy-3-oxobutyl phosphate binding.

The protein belongs to the DMRL synthase family. As to quaternary structure, forms an icosahedral capsid composed of 60 subunits, arranged as a dodecamer of pentamers.

It catalyses the reaction (2S)-2-hydroxy-3-oxobutyl phosphate + 5-amino-6-(D-ribitylamino)uracil = 6,7-dimethyl-8-(1-D-ribityl)lumazine + phosphate + 2 H2O + H(+). It participates in cofactor biosynthesis; riboflavin biosynthesis; riboflavin from 2-hydroxy-3-oxobutyl phosphate and 5-amino-6-(D-ribitylamino)uracil: step 1/2. Functionally, catalyzes the formation of 6,7-dimethyl-8-ribityllumazine by condensation of 5-amino-6-(D-ribitylamino)uracil with 3,4-dihydroxy-2-butanone 4-phosphate. This is the penultimate step in the biosynthesis of riboflavin. This chain is 6,7-dimethyl-8-ribityllumazine synthase, found in Bacillus cereus (strain 03BB102).